Reading from the N-terminus, the 412-residue chain is Argininosuccinate synthase (412 aa).

Residue 10–18 (AYSGGLDTS) participates in ATP binding. Tyrosine 89 is a binding site for L-citrulline. Glycine 119 is an ATP binding site. Residues threonine 121, asparagine 125, and aspartate 126 each contribute to the L-aspartate site. Asparagine 125 serves as a coordination point for L-citrulline. Residues arginine 129, serine 177, glutamate 261, and tyrosine 273 each contribute to the L-citrulline site.

The protein belongs to the argininosuccinate synthase family. Type 1 subfamily. As to quaternary structure, homotetramer.

It is found in the cytoplasm. The enzyme catalyses L-citrulline + L-aspartate + ATP = 2-(N(omega)-L-arginino)succinate + AMP + diphosphate + H(+). The protein operates within amino-acid biosynthesis; L-arginine biosynthesis; L-arginine from L-ornithine and carbamoyl phosphate: step 2/3. This chain is Argininosuccinate synthase, found in Bifidobacterium longum (strain NCC 2705).